We begin with the raw amino-acid sequence, 661 residues long: CD180 antigen (661 aa).

Positions 1–20 (MAPDISCFFLVALFLASCRA) are cleaved as a signal peptide. The Extracellular segment spans residues 21–626 (TTSSDQKCIE…RLSDVTLSCS (606 aa)). Positions 33-53 (VNKTYNCENLGLNEIPGTLPN) constitute an LRRNT domain. 4 N-linked (GlcNAc...) asparagine glycosylation sites follow: Asn34, Asn53, Asn70, and Asn78. LRR repeat units follow at residues 54 to 75 (STEC…TFSR), 78 to 99 (NLTF…TFQS), 102 to 123 (RLDT…ALSG), 126 to 147 (ALKH…PLHN), 150 to 171 (TLES…KGFP), 174 to 195 (KLKV…DMSS), and 201 to 221 (NLSL…AFDS). N-linked (GlcNAc...) asparagine glycans are attached at residues Asn201, Asn244, and Asn288. LRR repeat units follow at residues 275–296 (SVES…TFHC), 299–321 (GLQE…VGLS), 322–343 (TLKK…SASN), 346–366 (SLTH…TGCL), and 371–391 (NLRE…CNLQ). N-linked (GlcNAc...) asparagine glycosylation is found at Asn394 and Asn402. LRR repeat units lie at residues 397 to 418 (HLQS…AFKE), 421 to 442 (QLEL…SPFQ), 446 to 466 (LLKV…QLFD), 470 to 493 (ALQH…NSLQ), 497 to 518 (RLEI…AFTS), 521 to 544 (MMNH…SHLK), and 546 to 566 (IYLN…LPIL). Residue Asn451 is glycosylated (N-linked (GlcNAc...) asparagine). Positions 577-627 (NPLDCTCSNIYFLEWYKENMQKLEDTEDTLCENPPLLRGVRLSDVTLSCSM) constitute an LRRCT domain. A helical transmembrane segment spans residues 627 to 650 (MAAVGIFFLIVFLLVFAILLIFAV). At 651–661 (KYFLRWKYQHI) the chain is on the cytoplasmic side.

Belongs to the Toll-like receptor family. As to quaternary structure, M-shaped tetramer of two CD180-LY86 heterodimers. As to expression, B-lymphocytes and spleen. Not detected in thymus, kidney, muscle, heart, brain or liver.

Its subcellular location is the cell membrane. May cooperate with MD-1 and TLR4 to mediate the innate immune response to bacterial lipopolysaccharide (LPS) in B-cells. Leads to NF-kappa-B activation. Also involved in the life/death decision of B-cells. In Mus musculus (Mouse), this protein is CD180 antigen (Cd180).